The sequence spans 231 residues: MHIMEGFLPLQWCLFWFAVSAPFIAYGIYQLNRLVKENRSTLPLLAVCGAFIFVLSSLKMPSVTGSCSHPTGTGLGAIMFGPFITSVLSIIVLVYQALFLAHGGLTTLGANVFSMGICGPLLGYWVYQGGKAINLNSIVNVFLASALADIFTYVITSIQLSLAFPAAAGGYMTSFITFAGIFAVTQVPLAIIEGIFLTLTFKYINQIRPDILIHLGVISPAQSKQILEAYS.

A run of 6 helical transmembrane segments spans residues 8-28 (LPLQWCLFWFAVSAPFIAYGI), 41-61 (TLPLLAVCGAFIFVLSSLKMP), 74-94 (GLGAIMFGPFITSVLSIIVLV), 97-117 (ALFLAHGGLTTLGANVFSMGI), 138-158 (IVNVFLASALADIFTYVITSI), and 175-195 (FITFAGIFAVTQVPLAIIEGI).

It belongs to the CbiM family. In terms of assembly, forms an energy-coupling factor (ECF) transporter complex composed of an ATP-binding protein (A component, CbiO), a transmembrane protein (T component, CbiQ) and 2 possible substrate-capture proteins (S components, CbiM and CbiN) of unknown stoichimetry.

It localises to the cell membrane. Its pathway is cofactor biosynthesis; adenosylcobalamin biosynthesis. Functionally, part of the energy-coupling factor (ECF) transporter complex CbiMNOQ involved in cobalt import. This is Putative cobalt transport protein CbiM 1 from Methanosphaerula palustris (strain ATCC BAA-1556 / DSM 19958 / E1-9c).